Consider the following 396-residue polypeptide: uncharacterized protein (396 aa).

12 helical membrane-spanning segments follow: residues 12 to 32 (LLAL…SVGL), 48 to 68 (GLTV…LTSL), 78 to 98 (LLWI…ASSI), 106 to 126 (VISA…AADI), 138 to 158 (IMFT…TFIG), 165 to 185 (FAFM…GILV), 209 to 229 (LLLL…VFTY), 242 to 262 (AGTV…GNMI), 271 to 291 (PIAA…VLTF), 297 to 317 (AAGL…VPGL), 338 to 358 (AMNI…GGVI), and 362 to 382 (IGLI…VILT).

It belongs to the major facilitator superfamily.

Its subcellular location is the cell membrane. This is an uncharacterized protein from Bacillus subtilis (strain 168).